The following is a 726-amino-acid chain: Catalase-peroxidase (726 aa).

A cross-link (tryptophyl-tyrosyl-methioninium (Trp-Tyr) (with M-252)) is located at residues 98-226; that stretch reads WHSAGTYRMQ…LAAVHMGLIY (129 aa). Histidine 99 (proton acceptor) is an active-site residue. Positions 226-252 form a cross-link, tryptophyl-tyrosyl-methioninium (Tyr-Met) (with W-98); it reads YVNPEGVNGQPDPARTAQHVRETFARM. Residue histidine 267 participates in heme b binding.

The protein belongs to the peroxidase family. Peroxidase/catalase subfamily. As to quaternary structure, homodimer or homotetramer. Heme b serves as cofactor. In terms of processing, formation of the three residue Trp-Tyr-Met cross-link is important for the catalase, but not the peroxidase activity of the enzyme.

The catalysed reaction is H2O2 + AH2 = A + 2 H2O. The enzyme catalyses 2 H2O2 = O2 + 2 H2O. Its function is as follows. Bifunctional enzyme with both catalase and broad-spectrum peroxidase activity. This chain is Catalase-peroxidase, found in Roseobacter denitrificans (strain ATCC 33942 / OCh 114) (Erythrobacter sp. (strain OCh 114)).